The primary structure comprises 336 residues: MDTGKRLVTVFGGTGNQGSSVVRSLLAHKDKLFHVRVITRDPTSEKAQACAKLGAELVKADGFNKSETVSAFMGSWGAFVNTNSDEEIYKIPGGRSDYDLGSTVLDATKEAGVKHVVYSSGLNLCKYTNGRVHSEGFESKYYVEQYGRRKGFQTFTPIVPASFMEAFLAESFCQSLGGFPWFKRDTGEYLLATPPYGGDERMPWVSVEDDFGDIVHGIFLDPDSYHLKTIQGSSELISFEKMVEDFMEVTGEKARYVRLKSWVDIPLDGTSCREEMRAIFHSMYSNGGKWFVPDESEIDTATTLKKEAKLAQGVTDGSLTAFKDWIHKQWERRLPN.

NADP(+) is bound by residues 12 to 17 (GGTGNQ), 40 to 44 (RDPTS), 61 to 62 (DG), 82 to 84 (TNS), K140, and 163 to 166 (FMEA).

The protein belongs to the NmrA-type oxidoreductase family.

Functionally, nmrA-like family domain-containing oxidoreductase; part of the gene cluster that mediates the biosynthesis of malbrancheamide, a dichlorinated fungal indole alkaloid that belongs to a family of natural products containing a characteristic bicyclo[2.2.2]diazaoctane core. The first step of malbrancheamide biosynthesis involves coupling of L-proline and L-tryptophan by malG, a bimodular NRPS, to produce L-Pro-L-Trp aldehyde through reductive offloading. This compound undergoes spontaneous cyclization and dehydration to give a dienamine which is reverse prenylated at C-2 by malE. The other prenyltransferase present in the cluster, malB, displays modest activity, suggesting that may be a redundant gene in the pathway. Subsequently, a [4+2] Diels-Alder cyclo-addition catalyzed by the bifunctional enzyme malC forms the characteristic bicyclo[2.2.2]diazaoctane ring of premalbrancheamid. Finally, the flavin-dependent halogenase malA catalyzes the iterative dichlorination of the indole ring of premalbrancheamide to yield C-9 monochlorinated malbrancheamide B, C-8 monochlorinated isomalbrancheamide B, and dichlorinated malbrancheamide. MalA is also able to brominate premalbrancheamide at C-9 to yield malbrancheamide C, and, to a lesser extend, at C-8 to yield isomalbrancheamide C. Finally, malA can brominate C-9 monochlorinated malbrancheamide B at C-8 to yield malbrancheamide D, or C-8 monochlorinated isomalbrancheamide B at C-9 to produce isomalbrancheamide D. The polypeptide is NmrA-like family domain-containing oxidoreductase malD (Malbranchea aurantiaca).